The sequence spans 499 residues: Glycerol kinase (499 aa).

Thr13 is a binding site for ADP. Positions 13, 14, and 15 each coordinate ATP. Thr13 serves as a coordination point for sn-glycerol 3-phosphate. Arg17 is an ADP binding site. Positions 83, 84, 135, and 244 each coordinate sn-glycerol 3-phosphate. 5 residues coordinate glycerol: Arg83, Glu84, Tyr135, Asp244, and Gln245. Thr266 and Gly309 together coordinate ADP. ATP contacts are provided by Thr266, Gly309, Gln313, and Gly410. Positions 410 and 414 each coordinate ADP.

This sequence belongs to the FGGY kinase family. As to quaternary structure, homotetramer and homodimer (in equilibrium).

The enzyme catalyses glycerol + ATP = sn-glycerol 3-phosphate + ADP + H(+). It participates in polyol metabolism; glycerol degradation via glycerol kinase pathway; sn-glycerol 3-phosphate from glycerol: step 1/1. Its activity is regulated as follows. Activated by phosphorylation and inhibited by fructose 1,6-bisphosphate (FBP). Its function is as follows. Key enzyme in the regulation of glycerol uptake and metabolism. Catalyzes the phosphorylation of glycerol to yield sn-glycerol 3-phosphate. This Brevibacillus brevis (strain 47 / JCM 6285 / NBRC 100599) protein is Glycerol kinase.